The primary structure comprises 380 residues: Probable G-protein coupled receptor 132 (380 aa).

Residues 1–45 (MCPMLLKNGYNGNATPVTTTAPWASLGLSAKTCNNVSFEESRIVL) lie on the Extracellular side of the membrane. N-linked (GlcNAc...) asparagine glycosylation occurs at Asn-35. Residues 46–68 (VVVYSAVCTLGVPANCLTAWLAL) traverse the membrane as a helical segment. Over 69–79 (LQVLQGNVLAV) the chain is Cytoplasmic. The chain crosses the membrane as a helical span at residues 80–102 (YLLCLALCELLYTGTLPLWVIYI). Over 103–116 (RNQHRWTLGLLACK) the chain is Extracellular. A disulfide bridge connects residues Cys-115 and Cys-186. The chain crosses the membrane as a helical span at residues 117–138 (VTAYIFFCNIYVSILFLCCISC). The Cytoplasmic segment spans residues 139 to 158 (DRFVAVVYALESRGRRRRRT). A helical membrane pass occupies residues 159 to 178 (AILISACIFILVGIVHYPVF). The Extracellular portion of the chain corresponds to 179 to 197 (QTEDKETCFDMLQMDSRIA). A helical transmembrane segment spans residues 198-220 (GYYYARFTVGFAIPLSIIAFTNH). Residues 221–246 (RIFRSIKQSMGLSAAQKAKVKHSAIA) lie on the Cytoplasmic side of the membrane. Residues 247 to 269 (VVVIFLVCFAPYHLVLLVKAAAF) form a helical membrane-spanning segment. The Extracellular segment spans residues 270–288 (SYYRGDRNAMCGLEERLYT). A helical transmembrane segment spans residues 289–311 (ASVVFLCLSTVNGVADPIIYVLA). Topologically, residues 312-380 (TDHSRQEVSR…PAKRLIEESC (69 aa)) are cytoplasmic.

Belongs to the G-protein coupled receptor 1 family. Highly expressed in macrophages and hematopoietic tissues rich in lymphocytes, like spleen and thymus. Weakly expressed in heart and lung. In atherosclerotic plaques, expression is observed around the lipid core and at the shoulder region.

Its subcellular location is the cell membrane. Functionally, may be a receptor for oxidized free fatty acids derived from linoleic and arachidonic acids such as 9-hydroxyoctadecadienoic acid (9-HODE). Activates a G alpha protein, most likely G alpha(q). May be involved in apoptosis. Functions at the G2/M checkpoint to delay mitosis. May function as a sensor that monitors the oxidative states and mediates appropriate cellular responses such as secretion of paracrine signals and attenuation of proliferation. May mediate ths accumulation of intracellular inositol phosphates at acidic pH through proton-sensing activity. The protein is Probable G-protein coupled receptor 132 (GPR132) of Homo sapiens (Human).